Consider the following 867-residue polypeptide: Mitochondrial escape protein 2 (867 aa).

Disordered stretches follow at residues 1 to 20 and 44 to 66; these read MISA…RGPR and RTTR…KESG. Residues 1-41 constitute a mitochondrion transit peptide; it reads MISAHILSRQATRPGHRGPRFTTHSTALLVQRSLGQGLPLA. Residues 42–308 lie on the Mitochondrial matrix side of the membrane; sequence HRRTTRAWES…IWAWFTSHPR (267 aa). The segment covering 48-59 has biased composition (low complexity); that stretch reads AWESTSSSTAST. Residues 203–293 form the RRM domain; the sequence is SRIRVEFVAA…TKLRLSYEQR (91 aa). A helical membrane pass occupies residues 309–329; sequence IVIPLVAALIAAFTVAVFDPI. Residues 330 to 867 are Mitochondrial intermembrane-facing; the sequence is REFFVKAHVQ…GVVKGQMVKG (538 aa). Basic and acidic residues predominate over residues 614 to 639; sequence FAHDGQQKDSESGDQDNDNKNQKKDS. The disordered stretch occupies residues 614–647; the sequence is FAHDGQQKDSESGDQDNDNKNQKKDSNTPAPLDP. A coiled-coil region spans residues 797 to 857; that stretch reads LLVLTELAKM…ARLKGLEKEM (61 aa).

The protein belongs to the YME2 family.

The protein localises to the mitochondrion inner membrane. In terms of biological role, plays a role in maintaining the mitochondrial genome and in controlling the mtDNA escape. Involved in the regulation of mtDNA nucleotide structure and number. May have a dispensable role in early maturation of pre-rRNA. The chain is Mitochondrial escape protein 2 (msp-45) from Neurospora crassa (strain ATCC 24698 / 74-OR23-1A / CBS 708.71 / DSM 1257 / FGSC 987).